A 545-amino-acid polypeptide reads, in one-letter code: Tetrahydrocannabinolic acid synthase (545 aa).

An N-terminal signal peptide occupies residues 1–28; the sequence is MNCSAFSFWFVCKIIFFFLSFHIQISIA. Residues C37 and C99 are joined by a disulfide bond. N-linked (GlcNAc...) asparagine glycosylation is found at N65 and N89. An FAD-binding PCMH-type domain is found at 77 to 251; the sequence is TTPKPLVIVT…AAWKIKLVAV (175 aa). FAD-binding positions include 109 to 115 and S120; that span reads TRSGGHD. The segment at residues 114–176 is a cross-link (6-(S-cysteinyl)-8alpha-(pros-histidyl)-FAD (His-Cys)); the sequence is HDAEGMSYIS…ENLSFPGGYC (63 aa). N-linked (GlcNAc...) asparagine glycosylation is present at N168. FAD contacts are provided by residues C176, 180-184, Y190, E236, and I241; that span reads GVGGH. Residue H292 participates in cannabigerolate binding. 3 N-linked (GlcNAc...) asparagine glycosylation sites follow: N297, N305, and N329. 2 residues coordinate cannabigerolate: Y417 and E442. N467 carries an N-linked (GlcNAc...) asparagine glycan. An FAD-binding site is contributed by 481-483; sequence YLN. Y484 (proton acceptor) is an active-site residue. The N-linked (GlcNAc...) asparagine glycan is linked to N499.

Belongs to the oxygen-dependent FAD-linked oxidoreductase family. As to quaternary structure, monomer. It depends on FAD as a cofactor. In terms of processing, glycosylated when produced in a heterologous system. The deglycosylated THCA synthase has more catalytic activity than the glycosylated form. The FAD cofactor is bound via a bicovalent 6-S-cysteinyl, 8alpha-N1-histidyl FAD linkage. As to expression, expressed in the secretory cells of glandular trichomes.

It localises to the secreted. The protein resides in the extracellular space. The protein localises to the apoplast. It catalyses the reaction cannabigerolate + O2 = Delta(9)-tetrahydrocannabinolate + H2O2. It participates in secondary metabolite biosynthesis; terpenoid biosynthesis. Its activity is regulated as follows. Inhibited by Hg(2+). Functionally, oxidoreductase involved in the biosynthesis of cannabinoids-related terpenophenolic natural products, which have pharmacological activity. Catalyzes the oxidative cyclization of the monoterpene moiety in cannabigerolic acid (CBGA), producing delta(9)-tetrahydrocannabinolate (THCA), the major cannabioid in drug-type Cannabis plants. Can also use cannabinerolic acid as substrate, but not cannabigerol or cannabinerol. The protein is Tetrahydrocannabinolic acid synthase of Cannabis sativa (Hemp).